We begin with the raw amino-acid sequence, 252 residues long: Probable endonuclease 4 (252 aa).

Positions 56, 96, 129, 162, 165, 191, 204, 206, and 233 each coordinate Zn(2+).

Belongs to the AP endonuclease 2 family. Zn(2+) is required as a cofactor.

The catalysed reaction is Endonucleolytic cleavage to 5'-phosphooligonucleotide end-products.. Functionally, endonuclease IV plays a role in DNA repair. It cleaves phosphodiester bonds at apurinic or apyrimidinic (AP) sites, generating a 3'-hydroxyl group and a 5'-terminal sugar phosphate. This Mycobacterium leprae (strain Br4923) protein is Probable endonuclease 4.